The sequence spans 877 residues: Protein SEY1 homolog (877 aa).

The Cytoplasmic segment spans residues Met1–Asn735. Positions Gly49–Leu307 constitute a GB1/RHD3-type G domain. Gly59–Ser66 contacts GTP. The stretch at Arg388 to Leu410 forms a coiled coil. Residues Leu736–Leu756 form a helical membrane-spanning segment. The Lumenal portion of the chain corresponds to Ser757–Pro759. A helical transmembrane segment spans residues Val760–Gln780. Residues Trp781–Glu877 are Cytoplasmic-facing. Positions Pro850–Glu877 are disordered. A compositionally biased stretch (basic and acidic residues) spans Lys867–Glu877.

This sequence belongs to the TRAFAC class dynamin-like GTPase superfamily. GB1/RHD3 GTPase family. RHD3 subfamily.

Its subcellular location is the endoplasmic reticulum membrane. Its function is as follows. Probable GTP-binding protein that may be involved in cell development. The sequence is that of Protein SEY1 homolog from Trypanosoma cruzi (strain CL Brener).